A 360-amino-acid chain; its full sequence is LETM1 domain-containing protein 1 (360 aa).

The interval 1 to 110 (MALSRVCWAR…KKARRIKTNM (110 aa)) is required and sufficient for mitochondrial import. Over 1–137 (MALSRVCWAR…LRQFRQDVTK (137 aa)) the chain is Cytoplasmic. Residues 138-158 (CLFLGIISIPPFANYLVFLLM) traverse the membrane as a helical segment. Over 159–360 (YLFPRQLLIR…LSTNYLGTRR (202 aa)) the chain is Mitochondrial intermembrane. The Letm1 RBD domain maps to 186–360 (FRKQSHPEII…LSTNYLGTRR (175 aa)).

As to quaternary structure, interacts with BRI3BP. Interacts (via C-terminal) with SMARCA4; the interaction regulates transcriptional expression of thermogenic genes in brown adipose tissue. As to expression, kidney, liver, skeletal muscle, heart and brain. Overexpressed in various tumors including leukemia, lymphoma, and carcinomas of the breast, kidney, ovary, stomach, colon and uterine cervix.

It is found in the mitochondrion outer membrane. Its subcellular location is the nucleus. The protein localises to the mitochondrion inner membrane. Its function is as follows. Plays an essential role for mitochondrial structure and function, as well as thermogenesis of brown adipocytes. In brown adipose tissue also localizes in the nucleus where it interacts with the chromatin remodeler SMARCA4 to regulate thermogenic genes expression, such as UCP1. May regulate phagocytosis and inflammatory responses to lipopolysaccharide in macrophages. Involved in tumorigenesis and may function as a negative regulator of the p53/TP53. The sequence is that of LETM1 domain-containing protein 1 from Homo sapiens (Human).